A 788-amino-acid polypeptide reads, in one-letter code: Cell division cycle protein 27 homolog (788 aa).

Positions 198–436 are disordered; sequence YLDSPASSLK…PLPSVASSLN (239 aa). Low complexity predominate over residues 217 to 229; sequence GPSSSSAASTAEP. Composition is skewed to polar residues over residues 241-273, 293-303, and 319-360; these read RGTI…SRIN, SSVTGSRSSLF, and NRAN…NPVR. Over residues 366-378 the composition is skewed to low complexity; it reads ADAAAAANKTAKT. Residues 391–414 are compositionally biased toward polar residues; sequence VSRNSNLARSLSGSTNSVASTASE. 5 TPR repeats span residues 561–594, 596–628, 629–662, 664–696, and 731–764; these read PQSW…DKRF, YAYT…SPRD, YRAW…NPTN, AMLC…NPLD, and AFIF…DPRG.

Belongs to the APC3/CDC27 family. In terms of assembly, the APC/C complex is probably composed of at least 12 subunits: apc-2, apc-10, apc-11, cdc-26, emb-1, emb-27, emb-30, mat-1, mat-2, mat-3, such-1 and gfi-3. As to expression, expressed in the ventral nerve cord.

The protein resides in the nucleus. The protein operates within protein modification; protein ubiquitination. Functionally, probable component of the anaphase promoting complex/cyclosome (APC/C), a cell cycle-regulated E3 ubiquitin ligase that controls progression through mitosis and the G1 phase of the cell cycle. The APC/C complex acts by mediating ubiquitination and subsequent degradation of target proteins. Developmental role in early embryogenesis and the metaphase to anaphase transition in oocyte and spermatocyte meiosis and mitosis in germ cells. Required for embryonic anterior-posterior axis formation. Plays a role in regulating the abundance of glr-1 receptors in postmitotic neurons, which may in turn control animal locomotion. The protein is Cell division cycle protein 27 homolog of Caenorhabditis elegans.